Here is a 525-residue protein sequence, read N- to C-terminus: CBL-interacting protein kinase 21 (525 aa).

Positions 87–342 (YEMGRALGEG…ITGIRAHEWF (256 aa)) constitute a Protein kinase domain. ATP-binding positions include 93 to 101 (LGEGHFGKV) and lysine 116. Aspartate 210 functions as the Proton acceptor in the catalytic mechanism. The segment at 228–257 (DFGLSALPQNQRKDGLLHTTCGSPNYIAPE) is activation loop. Residues 372–401 (DIETSPAISQINAFQLIGMSSCLDLSGFFE) enclose the NAF domain. Positions 407-436 (ERKIRFVSNYSPTSLFEKIESTVTEKGFQV) are PPI.

The protein belongs to the protein kinase superfamily. CAMK Ser/Thr protein kinase family. SNF1 subfamily. The cofactor is Mn(2+).

It carries out the reaction L-seryl-[protein] + ATP = O-phospho-L-seryl-[protein] + ADP + H(+). It catalyses the reaction L-threonyl-[protein] + ATP = O-phospho-L-threonyl-[protein] + ADP + H(+). In terms of biological role, CIPK serine-threonine protein kinases interact with CBL proteins. Binding of a CBL protein to the regulatory NAF domain of CIPK protein lead to the activation of the kinase in a calcium-dependent manner. This is CBL-interacting protein kinase 21 (CIPK21) from Oryza sativa subsp. japonica (Rice).